A 405-amino-acid chain; its full sequence is Arginine biosynthesis bifunctional protein ArgJ, mitochondrial (405 aa).

Thr174, Lys200, Thr211, and Glu300 together coordinate substrate. The active-site Nucleophile is the Thr211.

This sequence belongs to the ArgJ family. Heterodimer of an alpha and a beta chain. In terms of processing, the alpha and beta chains are autoproteolytically processed from a single precursor protein within the mitochondrion.

The protein localises to the mitochondrion matrix. It catalyses the reaction N(2)-acetyl-L-ornithine + L-glutamate = N-acetyl-L-glutamate + L-ornithine. It carries out the reaction L-glutamate + acetyl-CoA = N-acetyl-L-glutamate + CoA + H(+). It participates in amino-acid biosynthesis; L-arginine biosynthesis; L-ornithine and N-acetyl-L-glutamate from L-glutamate and N(2)-acetyl-L-ornithine (cyclic): step 1/1. The protein operates within amino-acid biosynthesis; L-arginine biosynthesis; N(2)-acetyl-L-ornithine from L-glutamate: step 1/4. In terms of biological role, catalyzes two activities which are involved in the cyclic version of arginine biosynthesis: the synthesis of acetylglutamate from glutamate and acetyl-CoA, and of ornithine by transacetylation between acetylornithine and glutamate. The chain is Arginine biosynthesis bifunctional protein ArgJ, mitochondrial from Candida tropicalis (strain ATCC MYA-3404 / T1) (Yeast).